Here is an 85-residue protein sequence, read N- to C-terminus: RNA-binding protein Hfq (85 aa).

Residues 9 to 68 (DPFLNALRRERIPVSIYLVNGIKLQGQIESFDQFVVLLKNTVSQMVYKHAISTVVPARIP) form the Sm domain.

The protein belongs to the Hfq family. In terms of assembly, homohexamer.

Its function is as follows. RNA chaperone that binds small regulatory RNA (sRNAs) and mRNAs to facilitate mRNA translational regulation in response to envelope stress, environmental stress and changes in metabolite concentrations. Also binds with high specificity to tRNAs. This chain is RNA-binding protein Hfq, found in Idiomarina loihiensis (strain ATCC BAA-735 / DSM 15497 / L2-TR).